The sequence spans 319 residues: FAD-dependent oxidoreductase FVFD30 (319 aa).

Positions 6, 18, and 25 each coordinate FAD. Residues Lys129 and Gly188 each contribute to the NAD(+) site. The NADP(+) site is built by Lys129 and Gly188. FAD contacts are provided by Asp228 and Tyr265. Residue Asp228 participates in 6-hydroxy-FAD binding. Position 265 (Tyr265) interacts with NAD(+). NADP(+) is bound at residue Tyr265. Residues 281–301 (GVGYFGVWWGIVIGGWLASLL) form a helical membrane-spanning segment.

The protein belongs to the FAD-dependent oxidoreductase family.

The protein localises to the membrane. Functionally, probable FAD-dependent oxidoreductase that plays a role in the regulation of fruiting body development. The protein is FAD-dependent oxidoreductase FVFD30 of Flammulina velutipes (Agaricus velutipes).